Here is a 530-residue protein sequence, read N- to C-terminus: Phosphoenolpyruvate carboxykinase (ATP) (530 aa).

Substrate is bound by residues Arg-58, Tyr-195, and Lys-201. ATP-binding positions include Lys-201, His-220, and 236–244 (GLSGTGKTT). Mn(2+) contacts are provided by Lys-201 and His-220. Asp-257 lines the Mn(2+) pocket. ATP-binding positions include Glu-285, Arg-321, 440–441 (RI), and Thr-446. Substrate is bound at residue Arg-321.

Belongs to the phosphoenolpyruvate carboxykinase (ATP) family. Mn(2+) serves as cofactor.

It is found in the cytoplasm. The enzyme catalyses oxaloacetate + ATP = phosphoenolpyruvate + ADP + CO2. It functions in the pathway carbohydrate biosynthesis; gluconeogenesis. Involved in the gluconeogenesis. Catalyzes the conversion of oxaloacetate (OAA) to phosphoenolpyruvate (PEP) through direct phosphoryl transfer between the nucleoside triphosphate and OAA. This chain is Phosphoenolpyruvate carboxykinase (ATP), found in Staphylococcus aureus (strain MSSA476).